The primary structure comprises 564 residues: MSEAGRAAAGPCPEVSPSRSQQLGGLLRCLRDSETRRLELERKLMEYKSSDAYLMKLKYVKLKKYLEEVNERQKRALLRNQTFLNEFNEFEAHVKASSSELIEKMVRYGREIKSGLSFQEGDLARGDKEEGCNEQMPQAARQAGIHAKTALSRSLHHPVPFFMGHCMSACSVQQETPQPAACPNSLTALQGDETDGHPTQADDDMQHANKLDEQGGKSYVPMGEKMSIRDSSLHSSLLNFTERKNSTELCSALPDGGSLQSRTADLASDTSVEEVVTREHLVASAKEVCEQPVLLASAPEPSITGPQCNLNTQQAASQDSSSSSTHPEENYSLQPPSCCAAEDEPLGSSVPEGFCSQDGSLKEDLEASEAAVLCQLPEAKSGQQWDVATLQASLNSHTAFLEEHEHLCTEELAAVLHSTLDLDEEAPGSQAPPLLREVLAEECGDGSSVQSNESSYSLPSIPNDSREVEQAKHVLWLDSMGKQGCVIGNNGSEAKESQEMCSERSSSSERSGDLSRPEFRKGAITAIKSKAFWGESDDSSSEAVDALRPQTRSPEADDFDDFYD.

Positions 1-21 (MSEAGRAAAGPCPEVSPSRSQ) are disordered. Residues 28–50 (RCLRDSETRRLELERKLMEYKSS) are a coiled coil. Disordered stretches follow at residues 178-201 (QPAA…PTQA), 304-345 (TGPQ…EDEP), 442-465 (ECGD…PNDS), 487-519 (IGNN…RPEF), and 531-564 (AFWG…DFYD). Positions 313–324 (QQAASQDSSSSS) are enriched in low complexity. Over residues 447–463 (SSVQSNESSYSLPSIPN) the composition is skewed to polar residues. Positions 493 to 519 (EAKESQEMCSERSSSSERSGDLSRPEF) are enriched in basic and acidic residues.

Belongs to the kizuna family.

It is found in the cytoplasm. The protein localises to the cytoskeleton. The protein resides in the microtubule organizing center. It localises to the centrosome. Its subcellular location is the cilium basal body. Its function is as follows. Centrosomal protein required for establishing a robust mitotic centrosome architecture that can endure the forces that converge on the centrosomes during spindle formation. Required for stabilizing the expanded pericentriolar material around the centriole. This Gallus gallus (Chicken) protein is Centrosomal protein kizuna (KIZ).